Here is a 341-residue protein sequence, read N- to C-terminus: Pyrophosphate--fructose 6-phosphate 1-phosphotransferase (341 aa).

Position 10 (G10) interacts with diphosphate. Residue E103 coordinates Mg(2+). Substrate contacts are provided by residues 125-127, R162, 169-171, E221, R265, and 271-274; these read TID, MGR, and HTQR. The Proton acceptor role is filled by D127.

The protein belongs to the phosphofructokinase type A (PFKA) family. Mixed-substrate PFK group III subfamily. In terms of assembly, homotetramer. Mg(2+) is required as a cofactor.

It is found in the cytoplasm. It carries out the reaction beta-D-fructose 6-phosphate + diphosphate = beta-D-fructose 1,6-bisphosphate + phosphate + H(+). Its pathway is carbohydrate degradation; glycolysis; D-glyceraldehyde 3-phosphate and glycerone phosphate from D-glucose: step 3/4. Its activity is regulated as follows. Non-allosteric. Its function is as follows. Catalyzes the phosphorylation of D-fructose 6-phosphate, the first committing step of glycolysis. Uses inorganic phosphate (PPi) as phosphoryl donor instead of ATP like common ATP-dependent phosphofructokinases (ATP-PFKs), which renders the reaction reversible, and can thus function both in glycolysis and gluconeogenesis. Consistently, PPi-PFK can replace the enzymes of both the forward (ATP-PFK) and reverse (fructose-bisphosphatase (FBPase)) reactions. The polypeptide is Pyrophosphate--fructose 6-phosphate 1-phosphotransferase (Amycolatopsis methanolica).